We begin with the raw amino-acid sequence, 515 residues long: 2-isopropylmalate synthase (515 aa).

The Pyruvate carboxyltransferase domain maps to 5 to 268 (VIIFDTTLRD…VCGIDATQIV (264 aa)). Positions 14, 202, 204, and 239 each coordinate Mn(2+). The regulatory domain stretch occupies residues 394-515 (KFISLSQHSE…QAKLNAQMTP (122 aa)).

This sequence belongs to the alpha-IPM synthase/homocitrate synthase family. LeuA type 1 subfamily. As to quaternary structure, homodimer. Mn(2+) serves as cofactor.

Its subcellular location is the cytoplasm. The enzyme catalyses 3-methyl-2-oxobutanoate + acetyl-CoA + H2O = (2S)-2-isopropylmalate + CoA + H(+). It participates in amino-acid biosynthesis; L-leucine biosynthesis; L-leucine from 3-methyl-2-oxobutanoate: step 1/4. Its function is as follows. Catalyzes the condensation of the acetyl group of acetyl-CoA with 3-methyl-2-oxobutanoate (2-ketoisovalerate) to form 3-carboxy-3-hydroxy-4-methylpentanoate (2-isopropylmalate). This chain is 2-isopropylmalate synthase, found in Polynucleobacter necessarius subsp. necessarius (strain STIR1).